We begin with the raw amino-acid sequence, 274 residues long: 16S rRNA (guanine(1405)-N(7))-methyltransferase (274 aa).

Residues Phe-64, 102-104 (HMS), Arg-108, Ala-133, Asp-156, 182-183 (DL), Leu-198, and Gln-207 contribute to the S-adenosyl-L-methionine site.

The protein belongs to the methyltransferase superfamily. Aminoglycoside resistance family.

It catalyses the reaction guanosine(1405) in 16S rRNA + S-adenosyl-L-methionine = N(7)-methylguanosine(1405) in 16S rRNA + S-adenosyl-L-homocysteine. Its function is as follows. Specifically methylates the N(7) position of guanine 1405 in 16S rRNA. Confers resistance to aminoglycosides. This Micromonospora rosea protein is 16S rRNA (guanine(1405)-N(7))-methyltransferase (grm).